The following is a 320-amino-acid chain: Methionyl-tRNA formyltransferase (320 aa).

114-117 (SLLP) lines the (6S)-5,6,7,8-tetrahydrofolate pocket.

Belongs to the Fmt family.

The enzyme catalyses L-methionyl-tRNA(fMet) + (6R)-10-formyltetrahydrofolate = N-formyl-L-methionyl-tRNA(fMet) + (6S)-5,6,7,8-tetrahydrofolate + H(+). Attaches a formyl group to the free amino group of methionyl-tRNA(fMet). The formyl group appears to play a dual role in the initiator identity of N-formylmethionyl-tRNA by promoting its recognition by IF2 and preventing the misappropriation of this tRNA by the elongation apparatus. This is Methionyl-tRNA formyltransferase from Acinetobacter baumannii (strain AB0057).